A 43-amino-acid chain; its full sequence is Photosystem I reaction center subunit IX (43 aa).

Residues 7–27 (YLSVAPVLSTLWFGSLAGLLI) traverse the membrane as a helical segment.

This sequence belongs to the PsaJ family.

The protein localises to the plastid. It localises to the chloroplast thylakoid membrane. Its function is as follows. May help in the organization of the PsaE and PsaF subunits. The protein is Photosystem I reaction center subunit IX of Aethionema cordifolium (Lebanon stonecress).